We begin with the raw amino-acid sequence, 1183 residues long: Polyphosphatidylinositol phosphatase INP52 (1183 aa).

Positions P133–L153 are enriched in low complexity. The segment at P133–K161 is disordered. Position 152 is a phosphoserine (S152). The SAC domain maps to L167 to G507. S522 carries the post-translational modification Phosphoserine. Low complexity predominate over residues S955–V968. The interval S955–N1183 is disordered. Residues S1005 and S1016 each carry the phosphoserine modification. T1032 bears the Phosphothreonine mark. 3 stretches are compositionally biased toward polar residues: residues K1046–L1057, S1082–T1100, and K1130–N1145. At S1095 the chain carries Phosphoserine.

This sequence belongs to the synaptojanin family. The protein in the central section; belongs to the inositol 1,4,5-trisphosphate 5-phosphatase family. As to quaternary structure, interacts (via SAC domain) with BSP1; the interaction is direct. Interacts with ABP1.

It is found in the cytoplasm. The protein resides in the cytoskeleton. Its subcellular location is the actin patch. The catalysed reaction is a 1,2-diacyl-sn-glycero-3-phospho-(1D-myo-inositol-4,5-bisphosphate) + H2O = a 1,2-diacyl-sn-glycero-3-phospho-(1D-myo-inositol 4-phosphate) + phosphate. Functionally, dephosphorylates a number of phosphatidylinositols (PIs) like phosphatidylinositol 4,5-bisphosphate (PtdIns(4,5)P2), but also phosphatidylinositol 3-phosphate (PtdIns(3)P), phosphatidylinositol 4-phosphate (PtdIns(4)P), and phosphatidylinositol 3,5-bisphosphate (PtdIns(3,5)P2). Controls the cellular levels and subcellular distribution of phosphatidylinositol 3-phosphate and phosphatidylinositol 4,5-bisphosphate. Specifically functions within the early endocytic pathway and actin organization. In Saccharomyces cerevisiae (strain ATCC 204508 / S288c) (Baker's yeast), this protein is Polyphosphatidylinositol phosphatase INP52.